The following is a 232-amino-acid chain: Ubiquinone biosynthesis O-methyltransferase (232 aa).

Positions 36, 55, 76, and 120 each coordinate S-adenosyl-L-methionine.

This sequence belongs to the methyltransferase superfamily. UbiG/COQ3 family.

The enzyme catalyses a 3-demethylubiquinol + S-adenosyl-L-methionine = a ubiquinol + S-adenosyl-L-homocysteine + H(+). It catalyses the reaction a 3-(all-trans-polyprenyl)benzene-1,2-diol + S-adenosyl-L-methionine = a 2-methoxy-6-(all-trans-polyprenyl)phenol + S-adenosyl-L-homocysteine + H(+). It functions in the pathway cofactor biosynthesis; ubiquinone biosynthesis. Functionally, O-methyltransferase that catalyzes the 2 O-methylation steps in the ubiquinone biosynthetic pathway. In Burkholderia thailandensis (strain ATCC 700388 / DSM 13276 / CCUG 48851 / CIP 106301 / E264), this protein is Ubiquinone biosynthesis O-methyltransferase.